The chain runs to 252 residues: Probable transcriptional regulatory protein CE1776 (252 aa).

The interval 1-22 (MAGHSKWATTKHKKAANDAKRG) is disordered.

The protein belongs to the TACO1 family.

It localises to the cytoplasm. This is Probable transcriptional regulatory protein CE1776 from Corynebacterium efficiens (strain DSM 44549 / YS-314 / AJ 12310 / JCM 11189 / NBRC 100395).